A 428-amino-acid polypeptide reads, in one-letter code: MLDLDTVRNDPRRVKEALRAKGIGSPDLVDTLLEIDETRRSAITELQDVQSRQNELSQQIGALKREGKDEEAEAIIEKTGRMKEKINRLKEEVQEAEARQEELVLELPNIPHPSVPVGADEDDNEVEATVGEMPAFDFDPAPHWELADRHNLVDLERGAKVAGSGFPFYLGKGARLQRALLNFFLDRARERGYTEMQAPLFVNPESAKGTGQIPDKDALMYEIPRDDFYPIPTAEVPVTNFHRDEILAADDLPRRYCTYSPCWRREAGSYGSDVRGLNRLHQFDKVELVRIVPPDESYRALDALLEDAESALDALDLPYRRLLMCTGDMGFTQAKVYDLEVWSAAQERWLEVSSVSNFEAFQARRAQIRYRLEPEAKPELVHTLNGSGLAFPRIVAALLENNQQPDGSIELPEALHPYTGFARIGAEA.

233 to 235 is an L-serine binding site; sequence TAE. An ATP-binding site is contributed by 264 to 266; the sequence is RRE. Position 287 (glutamate 287) interacts with L-serine. 351–354 contacts ATP; that stretch reads EVSS. Serine 387 serves as a coordination point for L-serine.

This sequence belongs to the class-II aminoacyl-tRNA synthetase family. Type-1 seryl-tRNA synthetase subfamily. In terms of assembly, homodimer. The tRNA molecule binds across the dimer.

It is found in the cytoplasm. It catalyses the reaction tRNA(Ser) + L-serine + ATP = L-seryl-tRNA(Ser) + AMP + diphosphate + H(+). It carries out the reaction tRNA(Sec) + L-serine + ATP = L-seryl-tRNA(Sec) + AMP + diphosphate + H(+). It functions in the pathway aminoacyl-tRNA biosynthesis; selenocysteinyl-tRNA(Sec) biosynthesis; L-seryl-tRNA(Sec) from L-serine and tRNA(Sec): step 1/1. Its function is as follows. Catalyzes the attachment of serine to tRNA(Ser). Is also able to aminoacylate tRNA(Sec) with serine, to form the misacylated tRNA L-seryl-tRNA(Sec), which will be further converted into selenocysteinyl-tRNA(Sec). In Salinibacter ruber (strain DSM 13855 / M31), this protein is Serine--tRNA ligase.